A 193-amino-acid chain; its full sequence is Ion-translocating oxidoreductase complex subunit A (193 aa).

Transmembrane regions (helical) follow at residues 5–25, 39–59, 72–92, 102–122, 134–154, and 170–190; these read LLLLISTVLVNNFVLVKFLGL, VGMGLATTFVLTLTSAFAYLV, LSTLAFILVIAVVVQFTEMVI, ILGIYLPLITTNCIVLGLALL, VVYGFGGGLGFMLVLILFASL, and IAIGMVTAGLMSLAFLGFTGL.

It belongs to the NqrDE/RnfAE family. As to quaternary structure, the complex is composed of six subunits: RnfA, RnfB, RnfC, RnfD, RnfE and RnfG.

The protein localises to the cell inner membrane. Part of a membrane-bound complex that couples electron transfer with translocation of ions across the membrane. The protein is Ion-translocating oxidoreductase complex subunit A of Tolumonas auensis (strain DSM 9187 / NBRC 110442 / TA 4).